A 509-amino-acid chain; its full sequence is Histidine--tRNA ligase, cytoplasmic (509 aa).

Alanine 2 is subject to N-acetylalanine. Positions 3-59 (DRAALEELVRLQGAHVRGLKEQKASAEQIEEEVTKLLKLKAQLGQDEGKQKFVLKTP) constitute a WHEP-TRS domain. Residue serine 66 is modified to Phosphoserine. L-histidine contacts are provided by residues 130–132 (DLT), arginine 157, glutamine 173, aspartate 177, arginine 326, and 330–331 (YY). Serine 356 carries the post-translational modification Phosphoserine.

It belongs to the class-II aminoacyl-tRNA synthetase family. As to quaternary structure, homodimer.

It is found in the cytoplasm. It carries out the reaction tRNA(His) + L-histidine + ATP = L-histidyl-tRNA(His) + AMP + diphosphate + H(+). Catalyzes the ATP-dependent ligation of histidine to the 3'-end of its cognate tRNA, via the formation of an aminoacyl-adenylate intermediate (His-AMP). Plays a role in axon guidance. This is Histidine--tRNA ligase, cytoplasmic (Hars1) from Mus musculus (Mouse).